A 1712-amino-acid chain; its full sequence is Probable ATP-dependent RNA helicase DDX60 (1712 aa).

One can recognise a Helicase ATP-binding domain in the interval Leu-772–Lys-939. Ala-785 to Thr-792 is a binding site for ATP. Positions Asp-889–His-892 match the DEVH box motif. In terms of domain architecture, Helicase C-terminal spans Tyr-1226–Leu-1370.

The protein belongs to the helicase family. As to quaternary structure, interacts with EXOSC1, EXOSC4, RIGI, IFIH1/MDA5 and DHX58/LGP2. Brain, lymph node, prostate, stomach, thyroid, tongue, trachea, uterus, skeletal muscle, spleen, kidney, liver and small intestine.

The protein resides in the cytoplasm. It carries out the reaction ATP + H2O = ADP + phosphate + H(+). In terms of biological role, positively regulates RIGI- and IFIH1/MDA5-dependent type I interferon and interferon inducible gene expression in response to viral infection. Binds ssRNA, dsRNA and dsDNA and can promote the binding of RIGI to dsRNA. Exhibits antiviral activity against hepatitis C virus and vesicular stomatitis virus (VSV). The polypeptide is Probable ATP-dependent RNA helicase DDX60 (DDX60) (Homo sapiens (Human)).